The chain runs to 54 residues: Large ribosomal subunit protein eL37 (54 aa).

Residues cysteine 20, cysteine 23, cysteine 35, and cysteine 38 each contribute to the Zn(2+) site. The segment at 20–38 (CRRCGHHTYNVRTKRCSHC) adopts a C4-type zinc-finger fold.

The protein belongs to the eukaryotic ribosomal protein eL37 family. It depends on Zn(2+) as a cofactor.

Functionally, binds to the 23S rRNA. The protein is Large ribosomal subunit protein eL37 (rpl37e) of Thermoplasma acidophilum (strain ATCC 25905 / DSM 1728 / JCM 9062 / NBRC 15155 / AMRC-C165).